The following is a 248-amino-acid chain: mRNA-decapping protein OPG122 (248 aa).

The 183-residue stretch at 45-227 (HKRVSVSAIL…IAKYALDTAK (183 aa)) folds into the Nudix hydrolase domain. The short motif at 126 to 147 (GIPKRGENVPECLSREIKEEVN) is the Nudix box element. Residue Glu132 coordinates Mg(2+). Glu141 serves as the catalytic Nucleophile. A Mn(2+)-binding site is contributed by Glu145. Asp167 lines the Mg(2+) pocket.

This sequence belongs to the Nudix hydrolase family. Mg(2+) serves as cofactor. Requires Mn(2+) as cofactor.

Its subcellular location is the host mitochondrion. Functionally, decapping enzyme that remove the protective 5'-cap from both host and viral mRNAs to commit transcripts for decay by the cellular exonuclease XRN1. Preferentially targets spliced mRNAs and since all viral genes are intronless, it preferentially targets host over viral transcripts. Acceleration of the turnover of cellular transcripts promotes the shutoff of host protein synthesis and therefore diminish the magnitude of antiviral response. The protein is mRNA-decapping protein OPG122 (OPG122) of Vaccinia virus (strain Copenhagen) (VACV).